A 309-amino-acid chain; its full sequence is Ribosomal RNA small subunit methyltransferase H (309 aa).

Residues 33–35, Asp53, Phe79, Asp100, and Gln107 each bind S-adenosyl-L-methionine; that span reads GGH.

It belongs to the methyltransferase superfamily. RsmH family.

It is found in the cytoplasm. It carries out the reaction cytidine(1402) in 16S rRNA + S-adenosyl-L-methionine = N(4)-methylcytidine(1402) in 16S rRNA + S-adenosyl-L-homocysteine + H(+). Its function is as follows. Specifically methylates the N4 position of cytidine in position 1402 (C1402) of 16S rRNA. The chain is Ribosomal RNA small subunit methyltransferase H from Clostridium kluyveri (strain NBRC 12016).